The following is a 27-amino-acid chain: Defensin-like protein 1 (27 aa).

Q1 is subject to Pyrrolidone carboxylic acid.

It belongs to the DEFL family. In terms of assembly, forms oligomers in its native state.

Functionally, possesses antifungal activity sensitive to inorganic cations. The protein is Defensin-like protein 1 of Brassica campestris (Field mustard).